We begin with the raw amino-acid sequence, 266 residues long: Flavin-dependent thymidylate synthase (266 aa).

The 212-residue stretch at 11 to 222 folds into the ThyX domain; that stretch reads GFIRLVDYMG…PLACASFERH (212 aa). FAD-binding positions include Ser-57, 80-82, and Glu-88; that span reads RHR. DUMP contacts are provided by residues 77–80, 88–92, and Arg-161; these read QWIR and EISGR. Residues 80-90 carry the ThyX motif motif; the sequence is RHRTARLNEIS. FAD contacts are provided by residues 177–179 and His-183; that span reads DLH. Arg-188 is a binding site for dUMP. Residue Arg-188 is the Involved in ionization of N3 of dUMP, leading to its activation of the active site.

This sequence belongs to the thymidylate synthase ThyX family. In terms of assembly, homotetramer. FAD is required as a cofactor.

It catalyses the reaction dUMP + (6R)-5,10-methylene-5,6,7,8-tetrahydrofolate + NADPH + H(+) = dTMP + (6S)-5,6,7,8-tetrahydrofolate + NADP(+). The protein operates within pyrimidine metabolism; dTTP biosynthesis. Functionally, catalyzes the reductive methylation of 2'-deoxyuridine-5'-monophosphate (dUMP) to 2'-deoxythymidine-5'-monophosphate (dTMP) while utilizing 5,10-methylenetetrahydrofolate (mTHF) as the methyl donor, and NADPH and FADH(2) as the reductant. This chain is Flavin-dependent thymidylate synthase, found in Treponema denticola (strain ATCC 35405 / DSM 14222 / CIP 103919 / JCM 8153 / KCTC 15104).